The chain runs to 342 residues: Dihydroorotase (342 aa).

Residues His13 and His15 each coordinate Zn(2+). Substrate contacts are provided by residues 15-17 (HLR) and Asn41. The Zn(2+) site is built by Lys98, His135, and His173. The residue at position 98 (Lys98) is an N6-carboxylysine. His135 is a substrate binding site. Substrate is bound at residue Leu218. Asp246 serves as a coordination point for Zn(2+). Residue Asp246 is part of the active site. Substrate-binding residues include His250 and Ala262.

It belongs to the metallo-dependent hydrolases superfamily. DHOase family. Class II DHOase subfamily. As to quaternary structure, homodimer. The cofactor is Zn(2+).

It catalyses the reaction (S)-dihydroorotate + H2O = N-carbamoyl-L-aspartate + H(+). The protein operates within pyrimidine metabolism; UMP biosynthesis via de novo pathway; (S)-dihydroorotate from bicarbonate: step 3/3. Its function is as follows. Catalyzes the reversible cyclization of carbamoyl aspartate to dihydroorotate. The chain is Dihydroorotase from Vibrio vulnificus (strain YJ016).